The following is a 1188-amino-acid chain: DNA-directed RNA polymerase subunit beta (1188 aa).

Residues 1149–1188 (ELRDLDEGEDDDVMHVDDLEKAREKQAQETPEVSENSEEK) are disordered. Residues 1161–1175 (VMHVDDLEKAREKQA) are compositionally biased toward basic and acidic residues.

It belongs to the RNA polymerase beta chain family. The RNAP catalytic core consists of 2 alpha, 1 beta, 1 beta' and 1 omega subunit. When a sigma factor is associated with the core the holoenzyme is formed, which can initiate transcription.

The catalysed reaction is RNA(n) + a ribonucleoside 5'-triphosphate = RNA(n+1) + diphosphate. In terms of biological role, DNA-dependent RNA polymerase catalyzes the transcription of DNA into RNA using the four ribonucleoside triphosphates as substrates. The sequence is that of DNA-directed RNA polymerase subunit beta from Streptococcus uberis (strain ATCC BAA-854 / 0140J).